We begin with the raw amino-acid sequence, 425 residues long: Serine--tRNA ligase (425 aa).

Position 231–233 (231–233 (TAE)) interacts with L-serine. 262-264 (RSE) is a binding site for ATP. Glutamate 285 provides a ligand contact to L-serine. 349–352 (EISS) contacts ATP. Residue serine 385 participates in L-serine binding.

Belongs to the class-II aminoacyl-tRNA synthetase family. Type-1 seryl-tRNA synthetase subfamily. In terms of assembly, homodimer. The tRNA molecule binds across the dimer.

Its subcellular location is the cytoplasm. It catalyses the reaction tRNA(Ser) + L-serine + ATP = L-seryl-tRNA(Ser) + AMP + diphosphate + H(+). The enzyme catalyses tRNA(Sec) + L-serine + ATP = L-seryl-tRNA(Sec) + AMP + diphosphate + H(+). Its pathway is aminoacyl-tRNA biosynthesis; selenocysteinyl-tRNA(Sec) biosynthesis; L-seryl-tRNA(Sec) from L-serine and tRNA(Sec): step 1/1. Catalyzes the attachment of serine to tRNA(Ser). Is also able to aminoacylate tRNA(Sec) with serine, to form the misacylated tRNA L-seryl-tRNA(Sec), which will be further converted into selenocysteinyl-tRNA(Sec). This chain is Serine--tRNA ligase, found in Bacillus subtilis (strain 168).